We begin with the raw amino-acid sequence, 81 residues long: Adipogenin (81 aa).

Residues 16–36 (FLVFWLCLPVALLLFLLIIWL) form a helical membrane-spanning segment.

It belongs to the adipogenin family. Highly expressed in subcutaneous, perirenal and mesecentric adipose tissue.

Its subcellular location is the membrane. The protein resides in the nucleus. Plays a role in stimulating adipocyte differentiation and development. The sequence is that of Adipogenin from Bos taurus (Bovine).